A 195-amino-acid chain; its full sequence is Myelin-associated neurite-outgrowth inhibitor (195 aa).

The Cytoplasmic portion of the chain corresponds to 1–18; that stretch reads MNPVYSPGSSGVPYANAK. The helical transmembrane segment at 19-43 threads the bilayer; sequence GIGYPAGFPMGYAAAAPAYSPNMYA. Over 44–143 the chain is Extracellular; that stretch reads GPNPAFQPGY…APIPQPRGNG (100 aa). A helical membrane pass occupies residues 144–162; sequence VAMGMVAGTTMAMSAGTLL. The Cytoplasmic segment spans residues 163 to 195; sequence TSHYPTPVAPHQVTMPTYRPPGTPTYSYVPPQW.

The protein belongs to the FAM168 family.

It is found in the cytoplasm. The protein localises to the perinuclear region. The protein resides in the cell membrane. It localises to the cell projection. Its subcellular location is the axon. Inhibitor of neuronal axonal outgrowth. The protein is Myelin-associated neurite-outgrowth inhibitor (fam168b) of Xenopus tropicalis (Western clawed frog).